Here is a 466-residue protein sequence, read N- to C-terminus: MALNPDRLFSAEPGTREIARRLFASVEKLPIISPHGHTEPIWYARNEAFPDPASLFVKPDHYITRMLYSQGHSLESLGIASRDGRPSETDARKIWRLFATNWYLFRATPSRLWFEHAMETVFGITERLSQENADRIFDAIADQLTQPHMRPRALYDRFNIEAISTTDAATDPLIYHDEVIASGWHGRIIPAYRPDAAVDAGRPDFASEVEKLVGVAGTPLTWQGYLDAHRNRREYFKRRGATSSDHGHPTAQTADLSAGDASRLFDRVIKGNASTSDAEMFRAQMLTEMARMSIDDGLVMQIHPGSFRNHNPTVFERFGLDKGADIPRQTGFVDQLKPLLDAFGNDPRLTVILFTLDETAYSRELAPLAGHYPALKLGPAWWFFDSPEGILRYRKLTTETAGFYNTVGFNDDTRAYLSIPARHDMARRVDCAYLAGLVADHRLEEDEAYEVAHDLAYRLAKQTYKL.

The protein belongs to the metallo-dependent hydrolases superfamily. Uronate isomerase family.

The catalysed reaction is D-glucuronate = D-fructuronate. It carries out the reaction aldehydo-D-galacturonate = keto-D-tagaturonate. The protein operates within carbohydrate metabolism; pentose and glucuronate interconversion. The protein is Uronate isomerase of Brucella canis (strain ATCC 23365 / NCTC 10854 / RM-666).